Reading from the N-terminus, the 146-residue chain is Hemoglobin subunit beta (146 aa).

One can recognise a Globin domain in the interval glutamine 2–histidine 146. Heme b is bound by residues histidine 63 and histidine 92.

It belongs to the globin family. In terms of assembly, heterotetramer of two alpha chains and two beta chains. Red blood cells.

In terms of biological role, involved in oxygen transport from the lung to the various peripheral tissues. The polypeptide is Hemoglobin subunit beta (HBB) (Accipiter gentilis (Northern goshawk)).